A 326-amino-acid chain; its full sequence is Lipoyl synthase (326 aa).

Residues cysteine 56, cysteine 61, cysteine 67, cysteine 82, cysteine 86, cysteine 89, and serine 298 each coordinate [4Fe-4S] cluster. In terms of domain architecture, Radical SAM core spans 68 to 287; that stretch reads WEDREATFLI…KDEADAIGYS (220 aa).

This sequence belongs to the radical SAM superfamily. Lipoyl synthase family. It depends on [4Fe-4S] cluster as a cofactor.

It localises to the cytoplasm. The catalysed reaction is [[Fe-S] cluster scaffold protein carrying a second [4Fe-4S](2+) cluster] + N(6)-octanoyl-L-lysyl-[protein] + 2 oxidized [2Fe-2S]-[ferredoxin] + 2 S-adenosyl-L-methionine + 4 H(+) = [[Fe-S] cluster scaffold protein] + N(6)-[(R)-dihydrolipoyl]-L-lysyl-[protein] + 4 Fe(3+) + 2 hydrogen sulfide + 2 5'-deoxyadenosine + 2 L-methionine + 2 reduced [2Fe-2S]-[ferredoxin]. Its pathway is protein modification; protein lipoylation via endogenous pathway; protein N(6)-(lipoyl)lysine from octanoyl-[acyl-carrier-protein]: step 2/2. Functionally, catalyzes the radical-mediated insertion of two sulfur atoms into the C-6 and C-8 positions of the octanoyl moiety bound to the lipoyl domains of lipoate-dependent enzymes, thereby converting the octanoylated domains into lipoylated derivatives. The protein is Lipoyl synthase of Streptomyces griseus subsp. griseus (strain JCM 4626 / CBS 651.72 / NBRC 13350 / KCC S-0626 / ISP 5235).